The sequence spans 300 residues: Forkhead transcription factor fkh-9 (300 aa).

The segment at residues 66-161 is a DNA-binding region (fork-head); it reads RPSLSYKDLI…DKQTLRRRNR (96 aa). Positions 153–208 are disordered; sequence KQTLRRRNRQQPRALAKKSDAGRTLSRDDRGSSGSGETSPSPSQPSISPPNENPMP. Residues 169 to 183 are compositionally biased toward basic and acidic residues; that stretch reads KKSDAGRTLSRDDRG. The segment covering 187–198 has biased composition (low complexity); that stretch reads SGETSPSPSQPS.

As to expression, expressed in mechanosensory neurons.

The protein resides in the nucleus. Functionally, transcription factor. Binds to the regulatory elements of genes that contain the sequence motif 5'-TTGTTTCT-3'. Involved in regulating intestinal transcription of vitellogenin vit-2, acting in concert with transcription factors elt-2, mab-3 and daf-16, and also the TGF-beta/Sma/Mab pathway. Functions downstream of the insulin/IGF-1-like signaling (IIS) mediated pathway, in regeneration of axons after injury and in short-term memory, perhaps acting in neurons, and in modulation of longevity, perhaps acting non-neuronally. Plays a role in the modulation of endoplasmic reticulum (ER) homeostasis during chemical and pathogen stress, including exposure to the Gram-negative bacterium P.aeruginosa. The polypeptide is Forkhead transcription factor fkh-9 (Caenorhabditis elegans).